A 153-amino-acid polypeptide reads, in one-letter code: UPF0260 protein YcgN (153 aa).

The protein belongs to the UPF0260 family.

The sequence is that of UPF0260 protein YcgN from Salmonella typhi.